A 1194-amino-acid chain; its full sequence is Chitin synthase C (1194 aa).

Disordered regions lie at residues 1-91 and 136-177; these read MSLP…PNYL and GAHG…RRKA. The segment covering 12 to 23 has biased composition (basic and acidic residues); that stretch reads PRREETSAFREP. The span at 42–54 shows a compositional bias: basic residues; it reads PRHHRHHRSHSSR. Basic and acidic residues-rich tracts occupy residues 55–69 and 76–85; these read HQHDIDEERAEEGGI and VKPERGRMDP. The segment covering 150-164 has biased composition (basic residues); it reads TRHRSKKRKGSRKIS. A helical membrane pass occupies residues 221 to 241; that stretch reads IGLISIILMIAAFVGFLTFGF. N-linked (GlcNAc...) asparagine glycosylation is found at asparagine 351 and asparagine 390. Residues 476-496 traverse the membrane as a helical segment; the sequence is YVSLIFILSIVIVKFAFALLF. N-linked (GlcNAc...) asparagine glycosylation is found at asparagine 582, asparagine 608, asparagine 885, and asparagine 1014. Helical transmembrane passes span 1039–1059, 1073–1093, and 1097–1117; these read FVIFVELVGTVVLPAAISFTI, IIPLVLLALILGLPGVLVVVT, and LVYVLWMLVYLISLPIWNFVL.

Belongs to the chitin synthase family. Class V subfamily.

It localises to the cell membrane. It carries out the reaction [(1-&gt;4)-N-acetyl-beta-D-glucosaminyl](n) + UDP-N-acetyl-alpha-D-glucosamine = [(1-&gt;4)-N-acetyl-beta-D-glucosaminyl](n+1) + UDP + H(+). Polymerizes chitin, a structural polymer of the cell wall and septum, by transferring the sugar moiety of UDP-GlcNAc to the non-reducing end of the growing chitin polymer. Responsible for synthesis of 30-40% of the chitin in the cells. ChsA and chsD play redundant functions in conidia formation. The chitin synthesized by the chsD-encoded isozyme contributes to the rigidity of the walls of germinating conidia, of the subapical region of hyphae, and of conidiophore vesicles, but is not necessary for normal morphology of these cells. The chain is Chitin synthase C from Emericella nidulans (strain FGSC A4 / ATCC 38163 / CBS 112.46 / NRRL 194 / M139) (Aspergillus nidulans).